We begin with the raw amino-acid sequence, 405 residues long: Methylamine dehydrogenase heavy chain (405 aa).

A signal peptide spans 1 to 36; sequence MTTFDHPSMIRQPKPTGLAGGLVLAALMLSSSLALA.

The protein belongs to the aromatic amine dehydrogenase heavy chain family. Tetramer of two light and two heavy chains.

Its subcellular location is the periplasm. It catalyses the reaction 2 oxidized [amicyanin] + methylamine + H2O = 2 reduced [amicyanin] + formaldehyde + NH4(+) + 2 H(+). Its function is as follows. Methylamine dehydrogenase carries out the oxidation of methylamine. Electrons are passed from methylamine dehydrogenase to amicyanin. This Methylophilus methylotrophus (Bacterium W3A1) protein is Methylamine dehydrogenase heavy chain (mauB).